Consider the following 1282-residue polypeptide: MADASQATTPAAEGNPVPEVPETQTPPADVNGTTEQEQTEEGAEQALEDQPFVVTIVLPNTTETLDIPVSPMEQIHEIRQSIIEHPIAIEFSCFHLEFNGKKINDFIQVSDVEGLEHGAQLHLVEDPYTEKEARIHLIRIRELIGASGDRTDTVHGVLAGVSVHDDIVVENPDAPEAEIKEYDFQAPADLAILLPKETGPAPKSIKSISLSPWNPPPAYWRQKGHLLYLVIQTNEGEQHHVTAHVGGFFVNRCSNAKFDPLPKPAPKDCASHSLFTLLKKLSPSFEESFKKFQEFSSQKDPLATFQVGNTIPSAPWLVPSINSSLIAHEADNTRSQETYLLGGAENVDSLRDWNEEFQSAKELPKETIQDRVFRERLLAKLFADYTDAAARGAVLVARGEVAPLNPTEDKDAQIFVYNNIFFSFGADGVGTFTSEGGDEAARVATGKDVLGVKLVNQLDIDGLYTPGTVVIDYLGKRIVGQSIVPGIFKQPEAGENQIHYGAVDGKDIVAADERFAPSFEKLATALRVKKHAVWDKENKRHDLEASVEMKGLLGTDGRKYVLDLYRITPLDIAWMEESGPEGSEYPHRMTVLRPELVEALAKQKTREYVQAELLKRGIIKKPEEKKEGEEATEEAKTEEIKTEEAEKSEEPKAEETEKTEEASESTEVAEKKDEEAAKEDERIDISNFKFALNPDVFSGQVPQTEEEKAEMAQDEQDVRDACTYLRDSVIPALLNDLKESDISFPMDGRSLTRLLHRRGINMRYLGKLATLSEGTRVECFRQLCVREMIARAFKHVAAKYLRYLPLPLTSACLAHLLNCFLGFGLNSSPVAEVDEELRKVFSDADYSFEQVTPENLREAMQQEILHRFRFTLEDGWYNQLQHVQMLREVSQKLGVQIQNKKYAFVATEGEAEPVAEKPVAPAPAPVEDGNKKKKKKKAARETSPVAAAPVATVPHTFSPDDFVNVVPIVKDSTPRSALAEEALEAGRLSIYQNQKKLGEDLLLESLSLHEQIYGLVHPEVAQMYHTLSQLYYQLGQKDAAVELSRKAAIVAERTVGLDSSETVLNYLNLSLFLHQRGDSKEALLYARHALDLWKVIYGPDHPDTITTMNNYAVMLQSIKAYHESRRWFEESLRVCNKVFGEQTVHSATLLFQLAQALALDQDAKKAVDRMRESYNIFKTLLGPEDKNTKEAEHWLTQLTHNAVSVAKATKELQARRAKGSLGFSPRNATAGAAGIGSVVPSAVGVDNRNIDELVKFVENSEKKKGGKKSKGPSNPKKRGGKA.

Residues 1 to 50 (MADASQATTPAAEGNPVPEVPETQTPPADVNGTTEQEQTEEGAEQALEDQ) are disordered. Low complexity predominate over residues 16–36 (PVPEVPETQTPPADVNGTTEQ). The segment covering 37 to 47 (EQTEEGAEQAL) has biased composition (acidic residues). The 245-residue stretch at 331-575 (DNTRSQETYL…RITPLDIAWM (245 aa)) folds into the Clu domain. Residues 623-650 (EEKKEGEEATEEAKTEEIKTEEAEKSEE) are a coiled coil. 2 stretches are compositionally biased toward basic and acidic residues: residues 624-661 (EKKE…KTEE) and 668-680 (VAEK…AKED). 2 disordered regions span residues 624–680 (EKKE…AKED) and 913–945 (PVAE…TSPV). 3 TPR repeats span residues 1021-1054 (AQMY…AERT), 1063-1096 (VLNY…WKVI), and 1105-1138 (ITTM…CNKV). Positions 1257–1282 (VENSEKKKGGKKSKGPSNPKKRGGKA) are disordered. A compositionally biased stretch (basic residues) spans 1264–1282 (KGGKKSKGPSNPKKRGGKA).

This sequence belongs to the CLU family. As to quaternary structure, may associate with the eukaryotic translation initiation factor 3 (eIF-3) complex.

The protein localises to the cytoplasm. Functionally, mRNA-binding protein involved in proper cytoplasmic distribution of mitochondria. The chain is Clustered mitochondria protein homolog from Neurospora crassa (strain ATCC 24698 / 74-OR23-1A / CBS 708.71 / DSM 1257 / FGSC 987).